The primary structure comprises 135 residues: Envelope glycoprotein N (135 aa).

Residues 1–19 (MEWNTLVLGLLVLSVVASS) form the signal peptide. Over 20 to 98 (NNTSTASTPR…SHMYELSLSS (79 aa)) the chain is Virion surface. The segment covering 21 to 68 (NTSTASTPRPSSSTHASTTVKATTVATTSTTTATSTSSTTSAKPGSTT) has biased composition (low complexity). Residues 21 to 73 (NTSTASTPRPSSSTHASTTVKATTVATTSTTTATSTSSTTSAKPGSTTHDPNV) are disordered. A helical transmembrane segment spans residues 99–119 (FAAWWTMLNALILMGAFCIVL). Residues 120–135 (RHCCFQNFTATTTKGY) are Intravirion-facing.

It belongs to the herpesviridae glycoprotein N family. Interacts (via N-terminus) with gM (via N-terminus). The gM-gN heterodimer forms the gCII complex. O-glycosylated.

It is found in the virion membrane. Its subcellular location is the host membrane. The protein resides in the host Golgi apparatus. It localises to the host trans-Golgi network. Its function is as follows. Envelope glycoprotein necessary for proper maturation of gM and modulation of its membrane fusion activity. Also plays a critical role in virion morphogenesis. The polypeptide is Envelope glycoprotein N (Homo sapiens (Human)).